We begin with the raw amino-acid sequence, 393 residues long: Formate-dependent phosphoribosylglycinamide formyltransferase (393 aa).

N(1)-(5-phospho-beta-D-ribosyl)glycinamide is bound by residues 22 to 23 and glutamate 82; that span reads EL. ATP contacts are provided by residues arginine 114, lysine 155, 160-165, 195-198, and glutamate 203; these read SSGKGQ and EGFV. One can recognise an ATP-grasp domain in the interval 119–308; sequence RLAAEELGLP…EFALHARAIL (190 aa). 2 residues coordinate Mg(2+): glutamate 267 and glutamate 279. Residues aspartate 286, lysine 356, and 363–364 contribute to the N(1)-(5-phospho-beta-D-ribosyl)glycinamide site; that span reads RR.

This sequence belongs to the PurK/PurT family. As to quaternary structure, homodimer.

It carries out the reaction N(1)-(5-phospho-beta-D-ribosyl)glycinamide + formate + ATP = N(2)-formyl-N(1)-(5-phospho-beta-D-ribosyl)glycinamide + ADP + phosphate + H(+). It participates in purine metabolism; IMP biosynthesis via de novo pathway; N(2)-formyl-N(1)-(5-phospho-D-ribosyl)glycinamide from N(1)-(5-phospho-D-ribosyl)glycinamide (formate route): step 1/1. In terms of biological role, involved in the de novo purine biosynthesis. Catalyzes the transfer of formate to 5-phospho-ribosyl-glycinamide (GAR), producing 5-phospho-ribosyl-N-formylglycinamide (FGAR). Formate is provided by PurU via hydrolysis of 10-formyl-tetrahydrofolate. The sequence is that of Formate-dependent phosphoribosylglycinamide formyltransferase from Nitratidesulfovibrio vulgaris (strain DSM 19637 / Miyazaki F) (Desulfovibrio vulgaris).